We begin with the raw amino-acid sequence, 239 residues long: Cysteine-rich venom protein ENH1 (239 aa).

Positions 1–18 (MIVFILLSLAAVLQQFVA) are cleaved as a signal peptide. In terms of domain architecture, SCP spans 37–165 (VDMHNSFRRS…PYNYFYVCQY (129 aa)). 7 cysteine pairs are disulfide-bonded: Cys-74/Cys-152, Cys-91/Cys-166, Cys-147/Cys-163, Cys-185/Cys-192, Cys-188/Cys-197, Cys-210/Cys-228, and Cys-219/Cys-232. Positions 201–234 (CPITNTFTNCDSLLQQNSCEDSYIKTNCGASCFC) constitute a ShKT domain.

The protein belongs to the CRISP family. As to expression, expressed by the venom gland.

The protein resides in the secreted. Blocks contraction of smooth muscle elicited by high potassium-induced depolarization, but does not block caffeine-stimulated contraction. May target voltage-gated calcium channels on smooth muscle. This chain is Cysteine-rich venom protein ENH1, found in Pseudoferania polylepis (Macleay's water snake).